A 357-amino-acid chain; its full sequence is tRNA pseudouridine synthase B (357 aa).

The Nucleophile role is filled by Asp-42.

It belongs to the pseudouridine synthase TruB family. Type 1 subfamily.

The catalysed reaction is uridine(55) in tRNA = pseudouridine(55) in tRNA. In terms of biological role, responsible for synthesis of pseudouridine from uracil-55 in the psi GC loop of transfer RNAs. The sequence is that of tRNA pseudouridine synthase B from Treponema denticola (strain ATCC 35405 / DSM 14222 / CIP 103919 / JCM 8153 / KCTC 15104).